The sequence spans 546 residues: Probable T-complex protein 1 subunit theta (546 aa).

A disordered region spans residues 527–546 (MSKPAGGPKPPGPNPHWDDD).

It belongs to the TCP-1 chaperonin family. As to quaternary structure, heterooligomeric complex of about 850 to 900 kDa that forms two stacked rings, 12 to 16 nm in diameter.

The protein localises to the cytoplasm. Functionally, molecular chaperone; assists the folding of proteins upon ATP hydrolysis. Known to play a role, in vitro, in the folding of actin and tubulin. This Schizosaccharomyces pombe (strain 972 / ATCC 24843) (Fission yeast) protein is Probable T-complex protein 1 subunit theta (cct8).